Reading from the N-terminus, the 601-residue chain is Oligoendopeptidase F homolog (601 aa).

H387 contributes to the Zn(2+) binding site. E388 is a catalytic residue. H391 and H394 together coordinate Zn(2+).

Belongs to the peptidase M3 family. The cofactor is Zn(2+).

In terms of biological role, hydrolyzes peptides containing between 7 and 17 amino acids with a rather wide specificity. This Lactococcus lactis subsp. lactis (strain IL1403) (Streptococcus lactis) protein is Oligoendopeptidase F homolog (pepF).